We begin with the raw amino-acid sequence, 216 residues long: Cytochrome c biogenesis ATP-binding export protein CcmA (216 aa).

Positions 11 to 216 (VSASKLTCIR…RKIRLDYRFV (206 aa)) constitute an ABC transporter domain. An ATP-binding site is contributed by 43–50 (GPNGAGKT).

The protein belongs to the ABC transporter superfamily. CcmA exporter (TC 3.A.1.107) family. As to quaternary structure, the complex is composed of two ATP-binding proteins (CcmA) and two transmembrane proteins (CcmB).

Its subcellular location is the cell inner membrane. It carries out the reaction heme b(in) + ATP + H2O = heme b(out) + ADP + phosphate + H(+). Its function is as follows. Part of the ABC transporter complex CcmAB involved in the biogenesis of c-type cytochromes; once thought to export heme, this seems not to be the case, but its exact role is uncertain. Responsible for energy coupling to the transport system. This Shewanella sp. (strain MR-7) protein is Cytochrome c biogenesis ATP-binding export protein CcmA.